Consider the following 352-residue polypeptide: Photosystem II protein D1 (352 aa).

T2 carries the N-acetylthreonine modification. T2 is subject to Phosphothreonine. 3 helical membrane-spanning segments follow: residues 29–46 (YIGWFGVIMIPCLLTATS), 118–133 (HFLLGVYCYMGREWEL), and 142–156 (WIAVAYSAPVAAASA). H118 serves as a coordination point for chlorophyll a. Position 126 (Y126) interacts with pheophytin a. 2 residues coordinate [CaMn4O5] cluster: D170 and E189. A helical transmembrane segment spans residues 197–218 (FHMLGVAGVFGGSLFSAMHGSL). H198 lines the chlorophyll a pocket. A quinone-binding positions include H215 and 264-265 (SF). H215 is a Fe cation binding site. Residue H272 coordinates Fe cation. The chain crosses the membrane as a helical span at residues 274–288 (FLAAWPVIGIWFTAL). [CaMn4O5] cluster is bound by residues H332, E333, D342, and A344. A propeptide spanning residues 345 to 352 (STNSSSNN) is cleaved from the precursor.

It belongs to the reaction center PufL/M/PsbA/D family. PSII is composed of 1 copy each of membrane proteins PsbA, PsbB, PsbC, PsbD, PsbE, PsbF, PsbH, PsbI, PsbJ, PsbK, PsbL, PsbM, PsbT, PsbX, PsbY, PsbZ, Psb30/Ycf12, at least 3 peripheral proteins of the oxygen-evolving complex and a large number of cofactors. It forms dimeric complexes. The D1/D2 heterodimer binds P680, chlorophylls that are the primary electron donor of PSII, and subsequent electron acceptors. It shares a non-heme iron and each subunit binds pheophytin, quinone, additional chlorophylls, carotenoids and lipids. D1 provides most of the ligands for the Mn4-Ca-O5 cluster of the oxygen-evolving complex (OEC). There is also a Cl(-1) ion associated with D1 and D2, which is required for oxygen evolution. The PSII complex binds additional chlorophylls, carotenoids and specific lipids. serves as cofactor. Tyr-161 forms a radical intermediate that is referred to as redox-active TyrZ, YZ or Y-Z. Post-translationally, C-terminally processed by CTPA; processing is essential to allow assembly of the oxygen-evolving complex and thus photosynthetic growth.

Its subcellular location is the plastid. The protein localises to the chloroplast thylakoid membrane. It catalyses the reaction 2 a plastoquinone + 4 hnu + 2 H2O = 2 a plastoquinol + O2. In terms of biological role, this is one of the two reaction center proteins of photosystem II. Functionally, photosystem II (PSII) is a light-driven water:plastoquinone oxidoreductase that uses light energy to abstract electrons from H(2)O, generating O(2) and a proton gradient subsequently used for ATP formation. It consists of a core antenna complex that captures photons, and an electron transfer chain that converts photonic excitation into a charge separation. The D1/D2 (PsbA/PsbD) reaction center heterodimer binds P680, the primary electron donor of PSII as well as several subsequent electron acceptors. The protein is Photosystem II protein D1 of Chlamydomonas reinhardtii (Chlamydomonas smithii).